The sequence spans 1487 residues: Probable serine/threonine-protein kinase roco11 (1487 aa).

Residues 108-134 (TQPSSSHNHSNHHHHHHQQQLQQQQQQ) form a disordered region. The segment covering 116–125 (HSNHHHHHHQ) has biased composition (basic residues). 3 LRR repeats span residues 295 to 316 (NLAELDLSYNNIKEIPKEICQL), 318 to 340 (HLKILNMNNNQLDDLPLELANLT), and 341 to 362 (NLKYLAVQDNPLNKFPHHIIEQ). The Roc domain maps to 379-564 (KSETWNKVKL…KILTNEAEKS (186 aa)). Positions 379-564 (KSETWNKVKL…KILTNEAEKS (186 aa)) are small GTPase-like. Residues 392–399 (GQEGVGKS), 448–452 (DFGGQ), and 507–510 (THCD) contribute to the GTP site. Residues 678 to 872 (VNQKYIDYND…KTYWANGILL (195 aa)) enclose the COR domain. The disordered stretch occupies residues 891–1007 (SILPNNSSST…NNNNNNNNNI (117 aa)). A compositionally biased stretch (low complexity) spans 897-931 (SSSTSSSTSSSTSSSTSSSSSSSTSSSSTSTTTTT). A compositionally biased stretch (polar residues) spans 932 to 950 (VQIQSSPFGNSTTIVNKLT). Over residues 951–1007 (NIDNNNNNNNNNNNNNNNNNNINNNNNNNNNNNNNNNNNNNNNNNNNNNNNNNNNNI) the composition is skewed to low complexity. One can recognise a Protein kinase domain in the interval 1185–1452 (VVCEEQIGVG…YIVKELTNFY (268 aa)). Residues 1191-1199 (IGVGGFGLV) and Lys-1216 each bind ATP. Residue Asp-1313 is the Proton acceptor of the active site. The segment at 1464–1487 (KSINDKSPHPDLISNGVPKLQIAK) is disordered.

It belongs to the protein kinase superfamily. TKL Ser/Thr protein kinase family. ROCO subfamily.

It catalyses the reaction L-seryl-[protein] + ATP = O-phospho-L-seryl-[protein] + ADP + H(+). The enzyme catalyses L-threonyl-[protein] + ATP = O-phospho-L-threonyl-[protein] + ADP + H(+). This chain is Probable serine/threonine-protein kinase roco11 (roco11), found in Dictyostelium discoideum (Social amoeba).